We begin with the raw amino-acid sequence, 89 residues long: UPF0335 protein RPE_4107 (89 aa).

It belongs to the UPF0335 family.

In Rhodopseudomonas palustris (strain BisA53), this protein is UPF0335 protein RPE_4107.